Consider the following 349-residue polypeptide: 2-oxoglutarate-Fe(II) type oxidoreductase ppzD (349 aa).

A Fe2OG dioxygenase domain is found at N200–P311. Fe cation contacts are provided by H227, D229, and H287. Residue R302 coordinates 2-oxoglutarate.

It belongs to the iron/ascorbate-dependent oxidoreductase family. It depends on Fe(2+) as a cofactor.

The catalysed reaction is L-proline + 2-oxoglutarate + O2 = trans-4-hydroxy-L-proline + succinate + CO2. The enzyme catalyses L-proline + 2-oxoglutarate + O2 = trans-3-hydroxy-L-proline + succinate + CO2. It catalyses the reaction D-proline + 2-oxoglutarate + O2 = cis-4-hydroxy-D-proline + succinate + CO2. It functions in the pathway secondary metabolite biosynthesis. Functionally, 2-oxoglutarate-Fe(II) type oxidoreductase; part of the gene cluster that mediates the biosynthesis of pyrrolopyrazines, secondary metabolites showing insecticidal activity. Within the pathway, ppzD converts L-proline into trans-4-hydroxy-L-proline as a major product, yielding a key precursor for peramine biosynthesis. PpzD is also able to convert L-proline into trans-3-hydroxy-L-proline. The single multifunctional NRPS ppzA is sufficient to produce peramine via condensation of 1-pyrroline-5-carboxylate and arginine, N-methylation of the alpha-amino group of arginine and reduction of the thioester and the cyclization to form an iminium ion resulting in release from the peptide synthetase. Deprotonation of this intermediate and oxidation of the pyrroline ring would give rise to peramine. In Epichloe species that produce only peramine, the peramine synthetase gene is not localized in a gene cluster, in contrast to Metarhizium species that contain additional pyrrolopyrazine biosynthesis genes. The 2-oxoglutarate-Fe(II) type oxidoreductase ppzC hydroxylates peramine to yield the newly identified compound 8-hydroxyperamine whereas ppzD converts L-proline into trans-4-hydroxy-L-proline, a precursor of peramine biosynthesis. The chain is 2-oxoglutarate-Fe(II) type oxidoreductase ppzD (ppzD) from Metarhizium majus (strain ARSEF 297).